Reading from the N-terminus, the 316-residue chain is Transaldolase 2 (316 aa).

Catalysis depends on Lys131, which acts as the Schiff-base intermediate with substrate.

Belongs to the transaldolase family. Type 1 subfamily. Homodimer.

The protein resides in the cytoplasm. It catalyses the reaction D-sedoheptulose 7-phosphate + D-glyceraldehyde 3-phosphate = D-erythrose 4-phosphate + beta-D-fructose 6-phosphate. The protein operates within carbohydrate degradation; pentose phosphate pathway; D-glyceraldehyde 3-phosphate and beta-D-fructose 6-phosphate from D-ribose 5-phosphate and D-xylulose 5-phosphate (non-oxidative stage): step 2/3. Transaldolase is important for the balance of metabolites in the pentose-phosphate pathway. The polypeptide is Transaldolase 2 (Salmonella paratyphi A (strain ATCC 9150 / SARB42)).